Here is a 124-residue protein sequence, read N- to C-terminus: Mini zinc finger protein 4 (124 aa).

The ZF-HD dimerization-type; degenerate zinc-finger motif lies at 35 to 84; sequence YGECRRNHAARMGGHAVDGCREFLAEGEEGTGGALRCAACGCHRSFHRRV.

As to quaternary structure, homo- and heterodimers.

The protein resides in the cytoplasm. In terms of biological role, inhibits zinc finger homeodomain (ZHD) transcription factors, by interacting with them to prevent both their nuclear localization and their DNA-binding properties. In Oryza sativa subsp. japonica (Rice), this protein is Mini zinc finger protein 4 (MIF4).